We begin with the raw amino-acid sequence, 146 residues long: Protein MGF 100-3L (146 aa).

The protein belongs to the asfivirus MGF 100 family.

Functionally, plays a role in virus cell tropism, and may be required for efficient virus replication in macrophages. The protein is Protein MGF 100-3L of Ornithodoros (relapsing fever ticks).